A 201-amino-acid polypeptide reads, in one-letter code: Recombination protein RecR (201 aa).

The C4-type zinc-finger motif lies at 56 to 71; it reads CKICFNVSSDEVCQYC. The region spanning 79 to 174 is the Toprim domain; it reads SMICVVEESK…TVSRLASGLP (96 aa).

This sequence belongs to the RecR family.

Its function is as follows. May play a role in DNA repair. It seems to be involved in an RecBC-independent recombinational process of DNA repair. It may act with RecF and RecO. This Cutibacterium acnes (strain DSM 16379 / KPA171202) (Propionibacterium acnes) protein is Recombination protein RecR.